The following is a 609-amino-acid chain: Polyadenylate-binding protein 7 (609 aa).

4 consecutive RRM domains span residues 24–102 (ASLY…WSVR), 112–189 (GNVF…KFMK), 201–278 (TNLY…RAQK), and 304–381 (SNIY…IAQK). The region spanning 509–586 (EMKKSIQQRQ…AFEVLKSSKT (78 aa)) is the PABC domain.

The protein belongs to the polyadenylate-binding protein type-1 family. As to expression, expressed predominantly in siliques.

Its subcellular location is the cytoplasm. It localises to the nucleus. Functionally, binds the poly(A) tail of mRNA. Appears to be an important mediator of the multiple roles of the poly(A) tail in mRNA biogenesis, stability and translation. In Arabidopsis thaliana (Mouse-ear cress), this protein is Polyadenylate-binding protein 7 (PAB7).